We begin with the raw amino-acid sequence, 316 residues long: MISSLSASSSLVSSFVAVKATPVTGPLIPRRDLLSIRIRASSNQNSSGYCFPEKFKSFAKSAILIGAAVSMTGKFSTLPVKAESPVTTIEKTYEEVKEEKLSEITPLSELLDSTPEAVETLRSLLQQKLEKGEDEEALKLLERLVAAQPEETEWKFLMARLLGEMGRPENARQMFEEILQRNPLSFEALFENALLMDRSGEGNAVLQRLEDALAVAEAEYLVKEARDVRLIIAQIHFLQKNVDEALKSYEQLTKEDPKDFRPYFCRGMIYSLLDKNVEAKEQFAKYRELSPKKFEVEGYLRTPLSKMKLFGGSEEN.

A chloroplast-targeting transit peptide spans Met-1–Arg-39. 4 TPR repeats span residues Val-118–Glu-151, Thr-152–Ser-185, Arg-226–Asp-259, and Arg-261–Lys-293.

As to expression, ubiquitous. Preferentially expressed in newly formed green tissues.

It localises to the plastid. Its subcellular location is the chloroplast. Its function is as follows. Required for the early stage of chloroplast development. May be involved in chloroplast protein biosynthesis and/or degradation. The chain is protein SLOW GREEN 1, chloroplastic from Arabidopsis thaliana (Mouse-ear cress).